A 63-amino-acid chain; its full sequence is Large ribosomal subunit protein uL29 (63 aa).

This sequence belongs to the universal ribosomal protein uL29 family.

In Sulfurovum sp. (strain NBC37-1), this protein is Large ribosomal subunit protein uL29.